Here is a 375-residue protein sequence, read N- to C-terminus: Queuine tRNA-ribosyltransferase (375 aa).

Asp90 serves as the catalytic Proton acceptor. Substrate contacts are provided by residues 90–94, Asp144, Gln190, and Gly217; that span reads DSGGF. The interval 248-254 is RNA binding; sequence GIGTPHY. Asp267 serves as the catalytic Nucleophile. The tract at residues 272-276 is RNA binding; important for wobble base 34 recognition; that stretch reads TRIAR. Zn(2+) contacts are provided by Cys305, Cys307, Cys310, and His336.

This sequence belongs to the queuine tRNA-ribosyltransferase family. In terms of assembly, homodimer. Within each dimer, one monomer is responsible for RNA recognition and catalysis, while the other monomer binds to the replacement base PreQ1. Zn(2+) is required as a cofactor.

It catalyses the reaction 7-aminomethyl-7-carbaguanine + guanosine(34) in tRNA = 7-aminomethyl-7-carbaguanosine(34) in tRNA + guanine. The protein operates within tRNA modification; tRNA-queuosine biosynthesis. Functionally, catalyzes the base-exchange of a guanine (G) residue with the queuine precursor 7-aminomethyl-7-deazaguanine (PreQ1) at position 34 (anticodon wobble position) in tRNAs with GU(N) anticodons (tRNA-Asp, -Asn, -His and -Tyr). Catalysis occurs through a double-displacement mechanism. The nucleophile active site attacks the C1' of nucleotide 34 to detach the guanine base from the RNA, forming a covalent enzyme-RNA intermediate. The proton acceptor active site deprotonates the incoming PreQ1, allowing a nucleophilic attack on the C1' of the ribose to form the product. After dissociation, two additional enzymatic reactions on the tRNA convert PreQ1 to queuine (Q), resulting in the hypermodified nucleoside queuosine (7-(((4,5-cis-dihydroxy-2-cyclopenten-1-yl)amino)methyl)-7-deazaguanosine). This chain is Queuine tRNA-ribosyltransferase, found in Borrelia recurrentis (strain A1).